A 2049-amino-acid polypeptide reads, in one-letter code: Non-reducing polyketide synthase hmp3 (2049 aa).

The N-terminal acylcarrier protein transacylase (SAT) domain stretch occupies residues Leu9–His246. The 429-residue stretch at Pro365 to Asp793 folds into the Ketosynthase family 3 (KS3) domain. Residues Cys538, His673, and His712 each act as for beta-ketoacyl synthase activity in the active site. The interval Val887–Leu1146 is malonyl-CoA:ACP transacylase (MAT) domain. Ser978 (for acyl/malonyl transferase activity) is an active-site residue. An N-terminal hotdog fold region spans residues Gln1265 to Arg1404. Residues Gln1265–Asp1573 enclose the PKS/mFAS DH domain. The segment at Glu1269–Leu1572 is product template (PT) domain. The interval Gly1425–Asp1573 is C-terminal hotdog fold. The 79-residue stretch at Ser1626–Ser1704 folds into the Carrier domain. Ser1663 carries the O-(pantetheine 4'-phosphoryl)serine modification. The tract at residues Phe1700–Glu1747 is disordered. Positions Ser1703–Ser1717 are enriched in low complexity. Residues Pro1723–Ala1732 show a composition bias toward polar residues. The segment covering Pro1733–Glu1747 has biased composition (basic and acidic residues). Positions Ser1761–Lys1951 are thioesterase (TE) domain.

The protein operates within secondary metabolite biosynthesis. Functionally, non-reducing polyketide synthase; part of the gene cluster that mediates the biosynthesis of hypothemycin, a resorcylic acid lactone (RAL) that irreversibly inhibits a subset of protein kinases with a conserved cysteine in the ATP binding site such as human ERK2. The first step is performed by both PKSs hmp3 and hmp8 and leads to the production of 7',8'-dehydrozearalenol (DHZ). The highly reducing PKS hpm8 synthesizes the reduced hexaketide (7S,11S,2E,8E)-7,11-dihydroxy-dodeca-2,8-dienoate, which is transferred downstream to the non-reducing PKS hpm3. Hpm3 then extends the reduced hexaketide to a nonaketide, after which regioselective cyclization and macrolactonization affords DHZ. The next step is the conversion of DHZ into aigialomycin C and is performed by the O-methyltransferase hmp5, the FAD-binding monooxygenase hmp7, and the cytochrome P450 monooxygenase hmp1. The wide substrate tolerance of the hmp5 and hmp7 implies that the reactions from DHZ to aigialomycin C can occur in any order. The steps from aigialomycin C to hypothemycin are less well established. The FAD-linked oxidoreductase hmp9 presumably catalyzes oxidation of the C-6' hydroxyl to a ketone. The timing of this oxidation is important, since the resulting enone functional group is a Michael acceptor that can react spontaneously with glutathione, an abundant metabolite in fungal cells. The glutathione S-transferase hmp2 catalyzes cis-trans isomerization of the 7',8' double bond with equilibrium favoring the trans isomer. The hpm6-encoded transporter might preferentially pump hypothemycin out of the cell relative to the trans isomer aigialomycin A. The cis-to-trans isomerization may be coupled with C-4' hydroxylation, since all known hypothemycin analogs containing the enone functional group also have hydroxyl groups at both C-4' and C-5'. This is Non-reducing polyketide synthase hmp3 from Hypomyces subiculosus (Nectria subiculosa).